Here is a 907-residue protein sequence, read N- to C-terminus: Glutamate receptor 1 (907 aa).

An N-terminal signal peptide occupies residues 1–18 (MPYIFAFFCTGFLGAVVG). Over 19 to 536 (ANFPNNIQIG…GVFSFLDPLA (518 aa)) the chain is Extracellular. Asn63, Asn249, Asn257, Asn363, Asn401, and Asn406 each carry an N-linked (GlcNAc...) asparagine glycan. Cysteines 75 and 323 form a disulfide. L-glutamate is bound by residues Pro492, Thr494, and Arg499. A helical membrane pass occupies residues 537–557 (YEIWMCIVFAYIGVSVVLFLV). At 558-584 (SRFSPYEWHSEEFEEGRDQTTSDQSNE) the chain is on the cytoplasmic side. An intramembrane region (helical; Pore-forming) is located at residues 585–600 (FGIFNSLWFSLGAFMQ). An intramembrane segment occupies 601–603 (QGC). Cys603 carries the S-palmitoyl cysteine lipid modification. The Cytoplasmic segment spans residues 604–609 (DISPRS). Residues 610–630 (LSGRIVGGVWWFFTLIIISSY) form a helical membrane-spanning segment. Residues 631–805 (TANLAAFLTV…DKTSALSLSN (175 aa)) are Extracellular-facing. Ser645 carries the post-translational modification Phosphoserine. Ser668 and Thr669 together coordinate L-glutamate. A Phosphoserine; by PKC modification is found at Ser710. Glu719 contributes to the L-glutamate binding site. A disulfide bond links Cys732 and Cys787. Residues 806–826 (VAGVFYILIGGLGLAMLVALI) traverse the membrane as a helical segment. Topologically, residues 827-907 (EFCYKSRSES…SGMPLGATGL (81 aa)) are cytoplasmic. A lipid anchor (S-palmitoyl cysteine) is attached at Cys829. Ser849 is modified (phosphoserine; by PKC, PKA and CAMK2). Positions 857 to 881 (STLPRNSGAGASGGGGSGENGRVVS) are disordered. Ser863 bears the Phosphoserine; by PKC, PKA and PKG/PRKG2 mark. The segment covering 866–875 (GASGGGGSGE) has biased composition (gly residues). Positions 904–907 (ATGL) match the PDZ-binding motif.

The protein belongs to the glutamate-gated ion channel (TC 1.A.10.1) family. GRIA1 subfamily. Homotetramer or heterotetramer of pore-forming glutamate receptor subunits; heteromeric assembly can be the result of both receptor subtype and flip-flop forms and according the composition, one partner can be dominant with respect to the fast desensitizing current component, whereas the other can determine the steady-state component. Tetramers may be formed by the dimerization of dimers. Found in a complex with GRIA2, GRIA3, GRIA4, CNIH2, CNIH3, CACNG2, CACNG3, CACNG4, CACNG5, CACNG7 and CACNG8. Interacts with HIP1 and RASGRF2. Interacts with SYNDIG1 and GRIA2. Interacts with DLG1 (via C-terminus). Interacts with LRFN1. Interacts with PRKG2. Interacts with CNIH2 and CACNG2. Interacts with CACNG5; this interaction modulates the gating. Interacts (via C-terminus) with PDLIM4 (via LIM domain); this interaction as well as the interaction of PDLIM4 with alpha-actinin is required for their colocalization in early endosomes. Interacts with SNX27 (via PDZ domain); the interaction is required for recycling to the plasma membrane when endocytosed and prevent degradation in lysosomes. Interacts (via PDZ-binding motif) with SHANK3 (via PDZ domain). Interacts with CACNG3; associates GRIA1 with the adapter protein complex 4 (AP-4) to target GRIA1 to the somatodendritic compartment of neurons. Interacts with CACNG2; this interaction mediates traffick to the plasma membrane and modulation of desensitization. Interaction with CNIH2 and CNIH3; this interaction promotes expression at the plasma membrane and extensively modulates their gating properties by slowing deactivation and desensitization kinetics. Found in a complex with GRIA2, GRIA3, GRIA4, DLG4, CACNG8 and CNIH2. Phosphorylated at Ser-645. Phosphorylated at Ser-710 by PKC. Phosphorylated at Ser-849 by PKC, PKA and CAMK2. Phosphorylated at Ser-863 by PKC, PKA and PRKG2. Phosphorylation of Ser-863 is reduced by induction of long-term depression and increased by induction of long-term potentiation. In terms of processing, palmitoylated. Depalmitoylated by CPT1C and upon L-glutamate stimulation. ZDHHC3/GODZ specifically palmitoylates Cys-603, which leads to Golgi retention and decreased cell surface expression. In contrast, Cys-829 palmitoylation does not affect cell surface expression but regulates stimulation-dependent endocytosis. As to expression, detected in cerebellum (at protein level).

The protein localises to the cell membrane. The protein resides in the endoplasmic reticulum membrane. It is found in the postsynaptic cell membrane. It localises to the postsynaptic density membrane. Its subcellular location is the cell projection. The protein localises to the dendrite. The protein resides in the dendritic spine. It is found in the early endosome membrane. It localises to the recycling endosome membrane. Its subcellular location is the presynapse. The protein localises to the synapse. It catalyses the reaction Ca(2+)(in) = Ca(2+)(out). The enzyme catalyses Na(+)(in) = Na(+)(out). The catalysed reaction is Mg(2+)(in) = Mg(2+)(out). It carries out the reaction Li(+)(in) = Li(+)(out). It catalyses the reaction K(+)(in) = K(+)(out). The enzyme catalyses Sr(2+)(in) = Sr(2+)(out). Its activity is regulated as follows. Glutamate-gated receptor activity inhibited by DNQX (6,7-dinitroquinoxaline-2,3-dione). Functionally, ionotropic glutamate receptor that functions as a ligand-gated cation channel, gated by L-glutamate and glutamatergic agonists such as alpha-amino-3-hydroxy-5-methyl-4-isoxazolepropionic acid (AMPA), quisqualic acid, and kainic acid. L-glutamate acts as an excitatory neurotransmitter at many synapses in the central nervous system. Binding of the excitatory neurotransmitter L-glutamate induces a conformation change, leading to the opening of the cation channel, and thereby converts the chemical signal to an electrical impulse upon entry of monovalent and divalent cations such as sodium and calcium. The receptor then desensitizes rapidly and enters in a transient inactive state, characterized by the presence of bound agonist. In the presence of CACNG2 or CACNG4 or CACNG7 or CACNG8, shows resensitization which is characterized by a delayed accumulation of current flux upon continued application of L-glutamate. Resensitization is blocked by CNIH2 through interaction with CACNG8 in the CACNG8-containing AMPA receptors complex. Calcium (Ca(2+)) permeability depends on subunits composition and, heteromeric channels containing edited GRIA2 subunit are calcium-impermeable. Also permeable to other divalents cations such as strontium(2+) and magnesium(2+) and monovalent cations such as potassium(1+) and lithium(1+). In Rattus norvegicus (Rat), this protein is Glutamate receptor 1.